We begin with the raw amino-acid sequence, 504 residues long: Serine O-succinyltransferase (504 aa).

The N-terminal 26 residues, 1 to 26, are a transit peptide targeting the mitochondrion; the sequence is MLRASSKRLQLSWQVFRRFQSSNPQL. The tract at residues 49–70 is disordered; that stretch reads QACPNSVDPSASITSPSLSSGP. A compositionally biased stretch (low complexity) spans 57–70; the sequence is PSASITSPSLSSGP. Residues 117–395 enclose the AB hydrolase-1 domain; the sequence is NAILLHTGLS…SAEEIIKLNE (279 aa). Residues 124-127 form an important for substrate specificity region; the sequence is GLSA. Serine 221 functions as the Nucleophile in the catalytic mechanism. Arginine 290 serves as a coordination point for substrate. Residues aspartate 443 and histidine 480 contribute to the active site. Aspartate 481 contributes to the substrate binding site.

Belongs to the AB hydrolase superfamily. MetX family.

The protein resides in the mitochondrion. It carries out the reaction succinyl-CoA + L-serine = O-succinyl-L-serine + CoA. Its pathway is amino-acid biosynthesis; L-cysteine biosynthesis; L-cysteine from L-serine: step 1/2. Transfers a succinyl group from succinyl-CoA to L-serine, forming succinyl-L-serine. Also has weak serine acetyl transferase activity and homoserine succinyl transferase activity. This is Serine O-succinyltransferase from Schizosaccharomyces pombe (strain 972 / ATCC 24843) (Fission yeast).